A 347-amino-acid polypeptide reads, in one-letter code: Phosphoribosylformylglycinamidine cyclo-ligase (347 aa).

Belongs to the AIR synthase family.

Its subcellular location is the cytoplasm. The catalysed reaction is 2-formamido-N(1)-(5-O-phospho-beta-D-ribosyl)acetamidine + ATP = 5-amino-1-(5-phospho-beta-D-ribosyl)imidazole + ADP + phosphate + H(+). It functions in the pathway purine metabolism; IMP biosynthesis via de novo pathway; 5-amino-1-(5-phospho-D-ribosyl)imidazole from N(2)-formyl-N(1)-(5-phospho-D-ribosyl)glycinamide: step 2/2. This is Phosphoribosylformylglycinamidine cyclo-ligase from Dechloromonas aromatica (strain RCB).